The sequence spans 231 residues: Chalcone--flavanone isomerase (231 aa).

Positions 46, 112, and 189 each coordinate substrate.

Belongs to the chalcone isomerase family.

The catalysed reaction is a chalcone = a flavanone.. The protein operates within secondary metabolite biosynthesis; flavonoid biosynthesis. Functionally, catalyzes the intramolecular cyclization of bicyclic chalcones into tricyclic (S)-flavanones. Responsible for the isomerization of 4,2',4',6'-tetrahydroxychalcone (also termed chalcone) into naringenin. The sequence is that of Chalcone--flavanone isomerase (CHI) from Hordeum vulgare (Barley).